The following is a 1423-amino-acid chain: DNA-directed RNA polymerase subunit beta' (1423 aa).

The Zn(2+) site is built by C71, C73, C86, and C89. Residues D461, D463, and D465 each contribute to the Mg(2+) site. Zn(2+) contacts are provided by C815, C889, C896, and C899.

It belongs to the RNA polymerase beta' chain family. As to quaternary structure, the RNAP catalytic core consists of 2 alpha, 1 beta, 1 beta' and 1 omega subunit. When a sigma factor is associated with the core the holoenzyme is formed, which can initiate transcription. It depends on Mg(2+) as a cofactor. Requires Zn(2+) as cofactor.

It catalyses the reaction RNA(n) + a ribonucleoside 5'-triphosphate = RNA(n+1) + diphosphate. DNA-dependent RNA polymerase catalyzes the transcription of DNA into RNA using the four ribonucleoside triphosphates as substrates. This chain is DNA-directed RNA polymerase subunit beta', found in Actinobacillus pleuropneumoniae serotype 3 (strain JL03).